Reading from the N-terminus, the 258-residue chain is UDP-N-acetylenolpyruvoylglucosamine reductase (258 aa).

Residue R142 is part of the active site. The active-site Proton donor is the S184. Residue E254 is part of the active site.

Belongs to the MurB family. The cofactor is FAD.

The protein resides in the cytoplasm. It carries out the reaction UDP-N-acetyl-alpha-D-muramate + NADP(+) = UDP-N-acetyl-3-O-(1-carboxyvinyl)-alpha-D-glucosamine + NADPH + H(+). It functions in the pathway cell wall biogenesis; peptidoglycan biosynthesis. In terms of biological role, cell wall formation. The sequence is that of UDP-N-acetylenolpyruvoylglucosamine reductase from Campylobacter jejuni subsp. jejuni serotype O:2 (strain ATCC 700819 / NCTC 11168).